A 161-amino-acid chain; its full sequence is Peptidyl-prolyl cis-trans isomerase-like 1 (161 aa).

The 155-residue stretch at 1–155 (MATDVVFDTS…DEVKIIRAKV (155 aa)) folds into the PPIase cyclophilin-type domain.

This sequence belongs to the cyclophilin-type PPIase family. PPIL1 subfamily.

It carries out the reaction [protein]-peptidylproline (omega=180) = [protein]-peptidylproline (omega=0). In terms of biological role, PPIases accelerate the folding of proteins. It catalyzes the cis-trans isomerization of proline imidic peptide bonds in oligopeptides. This chain is Peptidyl-prolyl cis-trans isomerase-like 1 (cyp1), found in Aspergillus fumigatus (strain ATCC MYA-4609 / CBS 101355 / FGSC A1100 / Af293) (Neosartorya fumigata).